The primary structure comprises 156 residues: MPRRGPVPKRDVLPDPIYNSKLVTRLINKIMIDGKKGKAQKILYTAFDIIRERTGKDPMEVFEQALKNVMPVLEVRARRVGGANYQVPVEVRPDRRVTLGLRWLVQYARLRGERTMEERLANEIMDAANNTGAAVKKREDTHKMAEANKAFAHYRW.

It belongs to the universal ribosomal protein uS7 family. In terms of assembly, part of the 30S ribosomal subunit. Contacts proteins S9 and S11.

Its function is as follows. One of the primary rRNA binding proteins, it binds directly to 16S rRNA where it nucleates assembly of the head domain of the 30S subunit. Is located at the subunit interface close to the decoding center, probably blocks exit of the E-site tRNA. This is Small ribosomal subunit protein uS7 from Geobacillus sp. (strain WCH70).